We begin with the raw amino-acid sequence, 367 residues long: Probable dual-specificity RNA methyltransferase RlmN (367 aa).

Glu-92 acts as the Proton acceptor in catalysis. The Radical SAM core domain maps to 98 to 326; that stretch reads QEYGLSVCVT…YDTLKKNGIN (229 aa). Cys-105 and Cys-341 are disulfide-bonded. The [4Fe-4S] cluster site is built by Cys-112, Cys-116, and Cys-119. S-adenosyl-L-methionine-binding positions include 164 to 165, Ser-196, 219 to 221, and Asn-297; these read GE and SLH. The S-methylcysteine intermediate role is filled by Cys-341.

Belongs to the radical SAM superfamily. RlmN family. [4Fe-4S] cluster is required as a cofactor.

It is found in the cytoplasm. It carries out the reaction adenosine(2503) in 23S rRNA + 2 reduced [2Fe-2S]-[ferredoxin] + 2 S-adenosyl-L-methionine = 2-methyladenosine(2503) in 23S rRNA + 5'-deoxyadenosine + L-methionine + 2 oxidized [2Fe-2S]-[ferredoxin] + S-adenosyl-L-homocysteine. The enzyme catalyses adenosine(37) in tRNA + 2 reduced [2Fe-2S]-[ferredoxin] + 2 S-adenosyl-L-methionine = 2-methyladenosine(37) in tRNA + 5'-deoxyadenosine + L-methionine + 2 oxidized [2Fe-2S]-[ferredoxin] + S-adenosyl-L-homocysteine. Specifically methylates position 2 of adenine 2503 in 23S rRNA and position 2 of adenine 37 in tRNAs. This Listeria innocua serovar 6a (strain ATCC BAA-680 / CLIP 11262) protein is Probable dual-specificity RNA methyltransferase RlmN.